The sequence spans 544 residues: Membrane protein insertase YidC (544 aa).

5 consecutive transmembrane segments (helical) span residues 6–26, 345–365, 423–443, 460–480, and 503–523; these read NILLIGLLFVSFLLWQQWQTD, LLMFFQSIVGNWGAAIILITL, GGCLPILLQMPIFIALYWVLL, LSVQDPYYVMPILMGVSMFVM, and VVFTVFFLWFPAGLVLYWLVG.

This sequence belongs to the OXA1/ALB3/YidC family. Type 1 subfamily. As to quaternary structure, interacts with the Sec translocase complex via SecD. Specifically interacts with transmembrane segments of nascent integral membrane proteins during membrane integration.

The protein localises to the cell inner membrane. Functionally, required for the insertion and/or proper folding and/or complex formation of integral membrane proteins into the membrane. Involved in integration of membrane proteins that insert both dependently and independently of the Sec translocase complex, as well as at least some lipoproteins. Aids folding of multispanning membrane proteins. In Shewanella woodyi (strain ATCC 51908 / MS32), this protein is Membrane protein insertase YidC.